Reading from the N-terminus, the 338-residue chain is Nucleoid-associated protein VSAL_I1059 (338 aa).

The tract at residues 319-338 (KGTPPNLKDQLTRRLGSSES) is disordered.

Belongs to the YejK family.

It is found in the cytoplasm. The protein localises to the nucleoid. This chain is Nucleoid-associated protein VSAL_I1059, found in Aliivibrio salmonicida (strain LFI1238) (Vibrio salmonicida (strain LFI1238)).